The primary structure comprises 316 residues: Beta-ketoacyl-[acyl-carrier-protein] synthase III 1 (316 aa).

Residues Cys112 and His243 contribute to the active site. Positions 244-248 (QANYR) are ACP-binding. Asn273 is a catalytic residue.

The protein belongs to the thiolase-like superfamily. FabH family. Homodimer.

Its subcellular location is the cytoplasm. The catalysed reaction is malonyl-[ACP] + acetyl-CoA + H(+) = 3-oxobutanoyl-[ACP] + CO2 + CoA. The protein operates within lipid metabolism; fatty acid biosynthesis. Catalyzes the condensation reaction of fatty acid synthesis by the addition to an acyl acceptor of two carbons from malonyl-ACP. Catalyzes the first condensation reaction which initiates fatty acid synthesis and may therefore play a role in governing the total rate of fatty acid production. Possesses both acetoacetyl-ACP synthase and acetyl transacylase activities. Its substrate specificity determines the biosynthesis of branched-chain and/or straight-chain of fatty acids. The polypeptide is Beta-ketoacyl-[acyl-carrier-protein] synthase III 1 (Vibrio cholerae serotype O1 (strain ATCC 39315 / El Tor Inaba N16961)).